We begin with the raw amino-acid sequence, 142 residues long: Large ribosomal subunit protein uL11 (142 aa).

Belongs to the universal ribosomal protein uL11 family. As to quaternary structure, part of the ribosomal stalk of the 50S ribosomal subunit. Interacts with L10 and the large rRNA to form the base of the stalk. L10 forms an elongated spine to which L12 dimers bind in a sequential fashion forming a multimeric L10(L12)X complex. In terms of processing, one or more lysine residues are methylated.

Forms part of the ribosomal stalk which helps the ribosome interact with GTP-bound translation factors. The polypeptide is Large ribosomal subunit protein uL11 (Akkermansia muciniphila (strain ATCC BAA-835 / DSM 22959 / JCM 33894 / BCRC 81048 / CCUG 64013 / CIP 107961 / Muc)).